The sequence spans 233 residues: 2-C-methyl-D-erythritol 4-phosphate cytidylyltransferase (233 aa).

This sequence belongs to the IspD/TarI cytidylyltransferase family. IspD subfamily.

The catalysed reaction is 2-C-methyl-D-erythritol 4-phosphate + CTP + H(+) = 4-CDP-2-C-methyl-D-erythritol + diphosphate. It functions in the pathway isoprenoid biosynthesis; isopentenyl diphosphate biosynthesis via DXP pathway; isopentenyl diphosphate from 1-deoxy-D-xylulose 5-phosphate: step 2/6. Catalyzes the formation of 4-diphosphocytidyl-2-C-methyl-D-erythritol from CTP and 2-C-methyl-D-erythritol 4-phosphate (MEP). The protein is 2-C-methyl-D-erythritol 4-phosphate cytidylyltransferase of Gloeobacter violaceus (strain ATCC 29082 / PCC 7421).